The sequence spans 173 residues: Crossover junction endodeoxyribonuclease RuvC (173 aa).

Catalysis depends on residues Asp8, Glu67, and Asp139. Positions 8, 67, and 139 each coordinate Mg(2+).

The protein belongs to the RuvC family. Homodimer which binds Holliday junction (HJ) DNA. The HJ becomes 2-fold symmetrical on binding to RuvC with unstacked arms; it has a different conformation from HJ DNA in complex with RuvA. In the full resolvosome a probable DNA-RuvA(4)-RuvB(12)-RuvC(2) complex forms which resolves the HJ. Requires Mg(2+) as cofactor.

It localises to the cytoplasm. The enzyme catalyses Endonucleolytic cleavage at a junction such as a reciprocal single-stranded crossover between two homologous DNA duplexes (Holliday junction).. Functionally, the RuvA-RuvB-RuvC complex processes Holliday junction (HJ) DNA during genetic recombination and DNA repair. Endonuclease that resolves HJ intermediates. Cleaves cruciform DNA by making single-stranded nicks across the HJ at symmetrical positions within the homologous arms, yielding a 5'-phosphate and a 3'-hydroxyl group; requires a central core of homology in the junction. The consensus cleavage sequence is 5'-(A/T)TT(C/G)-3'. Cleavage occurs on the 3'-side of the TT dinucleotide at the point of strand exchange. HJ branch migration catalyzed by RuvA-RuvB allows RuvC to scan DNA until it finds its consensus sequence, where it cleaves and resolves the cruciform DNA. The polypeptide is Crossover junction endodeoxyribonuclease RuvC (Shewanella piezotolerans (strain WP3 / JCM 13877)).